Consider the following 652-residue polypeptide: Threonine--tRNA ligase (652 aa).

In terms of domain architecture, TGS spans 1 to 64 (MPDVIRITFP…HEDGELVIIT (64 aa)). The segment at 245–542 (DHRKLGKELE…LIEEYKGAFP (298 aa)) is catalytic. Residues cysteine 338, histidine 389, and histidine 519 each coordinate Zn(2+).

The protein belongs to the class-II aminoacyl-tRNA synthetase family. In terms of assembly, homodimer. It depends on Zn(2+) as a cofactor.

The protein resides in the cytoplasm. The enzyme catalyses tRNA(Thr) + L-threonine + ATP = L-threonyl-tRNA(Thr) + AMP + diphosphate + H(+). Its function is as follows. Catalyzes the attachment of threonine to tRNA(Thr) in a two-step reaction: L-threonine is first activated by ATP to form Thr-AMP and then transferred to the acceptor end of tRNA(Thr). Also edits incorrectly charged L-seryl-tRNA(Thr). This Geobacillus kaustophilus (strain HTA426) protein is Threonine--tRNA ligase.